A 367-amino-acid chain; its full sequence is Heme A synthase (367 aa).

A run of 8 helical transmembrane segments spans residues 26-46 (IRGW…VGGA), 111-131 (LLAR…WVTG), 139-159 (LPLL…WWMV), 174-194 (LATH…IYRG), 212-232 (AAVI…VAGL), 272-292 (FVHR…MIAA), 305-325 (SVLL…TLLL), and 327-347 (VPIG…GFAI). Residue H274 participates in heme binding. Position 335 (H335) interacts with heme.

The protein belongs to the COX15/CtaA family. Type 2 subfamily. As to quaternary structure, interacts with CtaB. The cofactor is heme b.

It is found in the cell membrane. The catalysed reaction is Fe(II)-heme o + 2 A + H2O = Fe(II)-heme a + 2 AH2. It participates in porphyrin-containing compound metabolism; heme A biosynthesis; heme A from heme O: step 1/1. In terms of biological role, catalyzes the conversion of heme O to heme A by two successive hydroxylations of the methyl group at C8. The first hydroxylation forms heme I, the second hydroxylation results in an unstable dihydroxymethyl group, which spontaneously dehydrates, resulting in the formyl group of heme A. The chain is Heme A synthase from Sinorhizobium medicae (strain WSM419) (Ensifer medicae).